The sequence spans 410 residues: Argininosuccinate synthase (410 aa).

Residues 11 to 19 (AYSGGLDTS) and Ala-37 contribute to the ATP site. Residues Tyr-88 and Ser-93 each coordinate L-citrulline. ATP is bound at residue 116–124 (SHGCTGKGN). The L-aspartate site is built by Thr-120, Asn-124, and Asp-125. An L-citrulline-binding site is contributed by Asn-124. 5 residues coordinate L-citrulline: Arg-128, Ser-181, Ser-190, Glu-269, and Tyr-281.

Belongs to the argininosuccinate synthase family. Type 1 subfamily. In terms of assembly, homotetramer.

The protein localises to the cytoplasm. The enzyme catalyses L-citrulline + L-aspartate + ATP = 2-(N(omega)-L-arginino)succinate + AMP + diphosphate + H(+). The protein operates within amino-acid biosynthesis; L-arginine biosynthesis; L-arginine from L-ornithine and carbamoyl phosphate: step 2/3. This chain is Argininosuccinate synthase (arg12), found in Schizosaccharomyces pombe (strain 972 / ATCC 24843) (Fission yeast).